A 61-amino-acid polypeptide reads, in one-letter code: Small ribosomal subunit protein uS14 (61 aa).

Zn(2+)-binding residues include cysteine 24, cysteine 27, cysteine 40, and cysteine 43.

The protein belongs to the universal ribosomal protein uS14 family. Zinc-binding uS14 subfamily. Part of the 30S ribosomal subunit. Contacts proteins S3 and S10. It depends on Zn(2+) as a cofactor.

Functionally, binds 16S rRNA, required for the assembly of 30S particles and may also be responsible for determining the conformation of the 16S rRNA at the A site. This chain is Small ribosomal subunit protein uS14, found in Coprothermobacter proteolyticus (strain ATCC 35245 / DSM 5265 / OCM 4 / BT).